Consider the following 408-residue polypeptide: MASRLPILIIGAGISGLTTARLLTNSGIPNIVFEASSPDRRQGFAISLREWGYTILLSALGDLPLRSLTRGVAPDREIGGSGWIDQAVWDNGTAKKLFVPDANSSTKELIVRANRNALRRWIADCGEEELDVRYGHRLKRVEGSLGDVRVEFENGAFYRGLMVVAADGVNSTVRSQVLAHVQPETVPAVLYHGEFQLPRADFDRLFRPHTGESNILAGVGDGFNTPFAVCNMTKTHVHMDWSYSRPVRGSGEDDPLYRPNLASEEAKRIPTALVEELASRDLAEPWSLFLNGEAIQHHRVFHWAVRCVSVTREDMQRAVGRGVAFVGDSWHAMPIFGGEGGNHALADGIELAGAIAAGATGDLGTAIGNYYDQAWKRSQDAVRRSKQRFYTLHRPMAEWRELSKKKPL.

Residues M1–A20 form the signal peptide. FAD contacts are provided by E34 and A45. Residues N91 and N103 are each glycosylated (N-linked (GlcNAc...) asparagine). R119 contributes to the FAD binding site. N170 and N231 each carry an N-linked (GlcNAc...) asparagine glycan. 2 residues coordinate FAD: D328 and G341.

Belongs to the paxM FAD-dependent monooxygenase family. FAD serves as cofactor.

It functions in the pathway secondary metabolite biosynthesis. In terms of biological role, FAD-dependent monooxygenase; part of the gene cluster that mediates the biosynthesis of neosartoricin, a prenylated anthracenone that exhibits T-cell antiproliferative activity, suggestive of a physiological role as an immunosuppressive agent. The non-reducing polyketide synthase nscA probably synthesizes and cyclizes the decaketide backbone. The hydrolase nscB then mediates the product release through hydrolysis followed by spontaneous decarboxylation. The prenyltransferase nscD catalyzes the addition of the dimethylallyl group to the aromatic C5. The FAD-dependent monooxygenase nscC is then responsible for the stereospecific hydroxylation at C2. There is no gene encoding O-acetyltransferase in the nsc gene cluster; thus, the last step of 2-O-acetylation leading to neosartoricin may be catalyzed by an unidentified O-acetyltransferase. This chain is FAD-dependent monooxygenase nscC, found in Aspergillus fumigatus (strain ATCC MYA-4609 / CBS 101355 / FGSC A1100 / Af293) (Neosartorya fumigata).